The chain runs to 178 residues: Outer envelope pore protein 16-2, chloroplastic (178 aa).

Positions 1 to 102 are contains beta strands; it reads MEKSGGRIVM…DALVKNTGKE (102 aa). A helical transmembrane segment spans residues 103 to 119; that stretch reads SLQWGLAAGLYSGITYG.

The protein belongs to the Tim17/Tim22/Tim23 family. Plastid outer envelope porin OEP16 (TC 1.B.30) subfamily. Homodimer and oligomers in membrane. Detected in pollen and seeds. Present in leaves and cotyledons.

It is found in the plastid. It localises to the chloroplast outer membrane. Voltage-dependent high-conductance channel with a slight cation-selectivity; selective for amino acids but excludes triosephosphates or uncharged sugars. Non-essential amino acid-selective channel protein and translocation pore for NADPH:protochlorophyllide oxidoreductase A (PORA) and possibly PORB. In Arabidopsis thaliana (Mouse-ear cress), this protein is Outer envelope pore protein 16-2, chloroplastic (OEP162).